The primary structure comprises 900 residues: Zinc finger protein 574 (900 aa).

3 consecutive C2H2-type zinc fingers follow at residues 16–38 (YVCS…QNSH), 76–98 (YQCL…QELH), and 126–148 (YECV…RQTH). Serine 164 is subject to Phosphoserine. The C2H2-type 4 zinc finger occupies 213 to 235 (YKCSECSQLFQMPADFLEHQATH). The span at 244-254 (AEPATQQETQV) shows a compositional bias: low complexity. A disordered region spans residues 244–306 (AEPATQQETQ…RRNNSGESGG (63 aa)). The span at 273–290 (HSYELRNELRNGEAIGRD) shows a compositional bias: basic and acidic residues. Serine 301 is subject to Phosphoserine. 10 consecutive C2H2-type zinc fingers follow at residues 312 to 334 (LFCS…LRSH), 339 to 361 (FKCP…LGDH), 367 to 389 (FLCV…RRAH), 395 to 416 (HSCP…RRTH), 469 to 492 (YRCL…RFVH), 498 to 520 (HKCS…LRTH), 526 to 548 (FPCP…RLTH), 554 to 576 (YRCG…RLVH), 582 to 604 (YRCQ…RYHH), and 610 to 633 (YKCR…LVIH). The C2H2-type 15; degenerate zinc-finger motif lies at 639–662 (YRCSSCGAAFPSSLRLREHRCAAA). The C2H2-type 16 zinc-finger motif lies at 670-692 (FECGTCGKKVGSAARLQAHEAAH). The disordered stretch occupies residues 690–741 (AAHAAAGPGEVLAKEPPAPRASRATRTPVAPSPTALSGTTSAAPAAPARRRG). A Phosphoserine modification is found at serine 721. Positions 721 to 736 (SPTALSGTTSAAPAAP) are enriched in low complexity. The residue at position 728 (threonine 728) is a Phosphothreonine. 4 consecutive C2H2-type zinc fingers follow at residues 742-764 (PECS…RRIH), 770-792 (YPCP…RRLH), 798-820 (FACE…RRIH), and 826-848 (YSCP…RKTH). Arginine 836 is subject to Asymmetric dimethylarginine.

This sequence belongs to the krueppel C2H2-type zinc-finger protein family.

Its subcellular location is the nucleus. In terms of biological role, may be involved in transcriptional regulation. The protein is Zinc finger protein 574 (Znf574) of Mus musculus (Mouse).